The primary structure comprises 274 residues: NH(3)-dependent NAD(+) synthetase (274 aa).

ATP is bound at residue 46-53 (GISGGQDS). Asp-52 is a binding site for Mg(2+). Arg-140 is a binding site for deamido-NAD(+). Thr-160 lines the ATP pocket. Position 165 (Glu-165) interacts with Mg(2+). Residues Lys-173 and Asp-180 each coordinate deamido-NAD(+). 2 residues coordinate ATP: Lys-189 and Thr-211. 260-261 (HK) provides a ligand contact to deamido-NAD(+).

The protein belongs to the NAD synthetase family. Homodimer.

The catalysed reaction is deamido-NAD(+) + NH4(+) + ATP = AMP + diphosphate + NAD(+) + H(+). It participates in cofactor biosynthesis; NAD(+) biosynthesis; NAD(+) from deamido-NAD(+) (ammonia route): step 1/1. Its function is as follows. Catalyzes the ATP-dependent amidation of deamido-NAD to form NAD. Uses ammonia as a nitrogen source. The chain is NH(3)-dependent NAD(+) synthetase from Streptococcus equi subsp. zooepidemicus (strain MGCS10565).